Consider the following 267-residue polypeptide: Mannose-specific lectin 1 (267 aa).

Positions 1–24 (MAKSLVLSSLLLALLLAAPLASLA) are cleaved as a signal peptide. Bulb-type lectin domains are found at residues 26-136 (NNVL…APNR) and 150-260 (RNVL…SPAR). 2 cysteine pairs are disulfide-bonded: C54–C76 and C178–C203.

As to quaternary structure, heterotetramer of 2 domain 1 and 2 domain 2 chains arranged as a dimer of domain 1/domain 2 heterodimers.

Mannose-specific lectin. Has weak agglutinating activity towards trypsin-treated erythrocytes from rabbit but not from human. The sequence is that of Mannose-specific lectin 1 from Crocus vernus (Dutch crocus).